The following is a 276-amino-acid chain: Nuclear egress protein 2 (276 aa).

The Perinuclear space segment spans residues 1 to 245; sequence MANVLKEKMY…FWRLSERHCR (245 aa). The chain crosses the membrane as a helical span at residues 246-264; the sequence is FALVGICFLLALYFCYVLL. At 265-276 the chain is on the nuclear side; sequence KKTPTPASGSVV.

Belongs to the herpesviridae NEC2 protein family. Forms a heterohexameric complex with NEC1. In terms of processing, phosphorylated.

It is found in the host nucleus inner membrane. Its function is as follows. Plays an essential role in virion nuclear egress, the first step of virion release from infected cell. Within the host nucleus, NEC1 interacts with the newly formed capsid through the vertexes and directs it to the inner nuclear membrane by associating with NEC2. Induces the budding of the capsid at the inner nuclear membrane as well as its envelopment into the perinuclear space. There, the NEC1/NEC2 complex promotes the fusion of the enveloped capsid with the outer nuclear membrane and the subsequent release of the viral capsid into the cytoplasm where it will reach the secondary budding sites in the host Golgi or trans-Golgi network. This chain is Nuclear egress protein 2, found in Homo sapiens (Human).